The primary structure comprises 734 residues: Photosystem I P700 chlorophyll a apoprotein A2 (734 aa).

The next 8 membrane-spanning stretches (helical) occupy residues 46-69 (IFASHFGQLAIIFLWTSGNLFHVA), 135-158 (LYTGALFLLFISAISLVGGWLHLQ), 175-199 (LNHHLSGLFGVSSLAWAGHLVHVAI), 273-291 (IAHHHLAIAFIFLVAGHMY), 330-353 (IHFQLGLALASLGVITSLVAQHMY), 369-395 (AALYTHHQYIAGFIMTGAFAHGAIFFI), 417-439 (AIISHLSWASLFLGFHTLGLYVH), and 517-535 (FLVHHAIALGLHTTTLILV). [4Fe-4S] cluster is bound by residues cysteine 559 and cysteine 568. 2 helical membrane-spanning segments follow: residues 575–596 (AFYLAVFWMLNTIGWVTFYWHW) and 643–665 (LSVWAWMFLFGHLVWATGFMFLI). The chlorophyll a site is built by histidine 654, methionine 662, and tyrosine 670. Tryptophan 671 is a phylloquinone binding site. The chain crosses the membrane as a helical span at residues 707–727 (LVGLAHFSVGYIFTYAAFLIA).

It belongs to the PsaA/PsaB family. In terms of assembly, the PsaA/B heterodimer binds the P700 chlorophyll special pair and subsequent electron acceptors. PSI consists of a core antenna complex that captures photons, and an electron transfer chain that converts photonic excitation into a charge separation. The eukaryotic PSI reaction center is composed of at least 11 subunits. P700 is a chlorophyll a/chlorophyll a' dimer, A0 is one or more chlorophyll a, A1 is one or both phylloquinones and FX is a shared 4Fe-4S iron-sulfur center. is required as a cofactor.

It localises to the plastid. It is found in the chloroplast thylakoid membrane. It catalyses the reaction reduced [plastocyanin] + hnu + oxidized [2Fe-2S]-[ferredoxin] = oxidized [plastocyanin] + reduced [2Fe-2S]-[ferredoxin]. PsaA and PsaB bind P700, the primary electron donor of photosystem I (PSI), as well as the electron acceptors A0, A1 and FX. PSI is a plastocyanin-ferredoxin oxidoreductase, converting photonic excitation into a charge separation, which transfers an electron from the donor P700 chlorophyll pair to the spectroscopically characterized acceptors A0, A1, FX, FA and FB in turn. Oxidized P700 is reduced on the lumenal side of the thylakoid membrane by plastocyanin. The polypeptide is Photosystem I P700 chlorophyll a apoprotein A2 (Nymphaea alba (White water-lily)).